A 176-amino-acid polypeptide reads, in one-letter code: Large ribosomal subunit protein uL10 (176 aa).

Belongs to the universal ribosomal protein uL10 family. In terms of assembly, part of the ribosomal stalk of the 50S ribosomal subunit. The N-terminus interacts with L11 and the large rRNA to form the base of the stalk. The C-terminus forms an elongated spine to which L12 dimers bind in a sequential fashion forming a multimeric L10(L12)X complex.

Forms part of the ribosomal stalk, playing a central role in the interaction of the ribosome with GTP-bound translation factors. The polypeptide is Large ribosomal subunit protein uL10 (Teredinibacter turnerae (strain ATCC 39867 / T7901)).